A 344-amino-acid polypeptide reads, in one-letter code: MKKAVILFNLGGPDKIENVEPFLFNLFNDPAILNLPTILRYPLAKLISNRRAPVAKKIYKELGGSSPILKLTMAQSKALETKLNQTEIDSEYKCFIVMRCWNPRANDVIKDVQSFNPEEIILMPLYPQYSAATSGSSIKEWRDVCKKNNYHVKTNTICCYPTDQNFINAHTKEIIKKIKDLKNFKLIFSAHGLPEKNIKKGDPYQWQVEQSVKKIVENLNIENLDWILSYQSRVGPLKWIGPSTEDIIVENSKLAKHIVLVPIAFVSEHSETLVELDIEYKEIADANGCKNYTRVPALGTNEDFIKAMSELIIKKNEYKFSENLYPPKIQCPSNFKKCPCLNYE.

Residues histidine 191 and glutamate 271 each coordinate Fe cation.

It belongs to the ferrochelatase family.

It localises to the cytoplasm. The enzyme catalyses heme b + 2 H(+) = protoporphyrin IX + Fe(2+). Its pathway is porphyrin-containing compound metabolism; protoheme biosynthesis; protoheme from protoporphyrin-IX: step 1/1. Functionally, catalyzes the ferrous insertion into protoporphyrin IX. This chain is Ferrochelatase, found in Pelagibacter ubique (strain HTCC1062).